We begin with the raw amino-acid sequence, 432 residues long: Glutamate-1-semialdehyde 2,1-aminomutase 1 (432 aa).

Lysine 268 is modified (N6-(pyridoxal phosphate)lysine).

This sequence belongs to the class-III pyridoxal-phosphate-dependent aminotransferase family. HemL subfamily. Homodimer. The cofactor is pyridoxal 5'-phosphate.

Its subcellular location is the cytoplasm. The enzyme catalyses (S)-4-amino-5-oxopentanoate = 5-aminolevulinate. The protein operates within porphyrin-containing compound metabolism; protoporphyrin-IX biosynthesis; 5-aminolevulinate from L-glutamyl-tRNA(Glu): step 2/2. The sequence is that of Glutamate-1-semialdehyde 2,1-aminomutase 1 from Bacillus licheniformis (strain ATCC 14580 / DSM 13 / JCM 2505 / CCUG 7422 / NBRC 12200 / NCIMB 9375 / NCTC 10341 / NRRL NRS-1264 / Gibson 46).